A 453-amino-acid chain; its full sequence is Probable L-galactonate transporter (453 aa).

The interval methionine 1–proline 23 is disordered. The Periplasmic segment spans residues methionine 1–threonine 42. Positions proline 10–alanine 20 are enriched in polar residues. The helical transmembrane segment at alanine 43–valine 63 threads the bilayer. Topologically, residues alanine 64–glutamate 71 are cytoplasmic. Residues leucine 72–isoleucine 92 form a helical membrane-spanning segment. At alanine 93–arginine 107 the chain is on the periplasmic side. Residues leucine 108–histidine 128 traverse the membrane as a helical segment. Residues asparagine 129–alanine 174 lie on the Cytoplasmic side of the membrane. The chain crosses the membrane as a helical span at residues serine 175 to tryptophan 195. A topological domain (periplasmic) is located at residue arginine 196. A helical membrane pass occupies residues glycine 197–tyrosine 217. Residues arginine 218–methionine 259 are Cytoplasmic-facing. The chain crosses the membrane as a helical span at residues tryptophan 260–leucine 280. Residues proline 281–threonine 295 are Periplasmic-facing. Residues glycine 296 to valine 316 form a helical membrane-spanning segment. The Cytoplasmic segment spans residues threonine 317 to lysine 332. Residues isoleucine 333–threonine 353 form a helical membrane-spanning segment. At threonine 354–valine 359 the chain is on the periplasmic side. The chain crosses the membrane as a helical span at residues leucine 360 to isoleucine 380. Topologically, residues histidine 381–serine 394 are cytoplasmic. The helical transmembrane segment at isoleucine 395 to valine 415 threads the bilayer. Over aspartate 416 to arginine 422 the chain is Periplasmic. A helical membrane pass occupies residues leucine 423 to valine 443. Residues arginine 444–aspartate 453 lie on the Cytoplasmic side of the membrane.

This sequence belongs to the major facilitator superfamily. Phthalate permease family.

It is found in the cell inner membrane. The enzyme catalyses L-galactonate(in) + H(+)(in) = L-galactonate(out) + H(+)(out). Functionally, probably responsible for the transport of L-galactonate from the periplasm across the inner membrane. Is essential for growth on L-galactonate as the sole carbon source. This chain is Probable L-galactonate transporter (lgoT), found in Escherichia coli (strain K12).